The chain runs to 327 residues: Undecaprenyl-phosphate 4-deoxy-4-formamido-L-arabinose transferase (327 aa).

A run of 2 helical transmembrane segments spans residues 236–256 (LSVF…LLVV) and 270–290 (VFML…AMGL).

This sequence belongs to the glycosyltransferase 2 family.

The protein resides in the cell inner membrane. The enzyme catalyses UDP-4-deoxy-4-formamido-beta-L-arabinose + di-trans,octa-cis-undecaprenyl phosphate = 4-deoxy-4-formamido-alpha-L-arabinopyranosyl di-trans,octa-cis-undecaprenyl phosphate + UDP. The protein operates within glycolipid biosynthesis; 4-amino-4-deoxy-alpha-L-arabinose undecaprenyl phosphate biosynthesis; 4-amino-4-deoxy-alpha-L-arabinose undecaprenyl phosphate from UDP-4-deoxy-4-formamido-beta-L-arabinose and undecaprenyl phosphate: step 1/2. Its pathway is bacterial outer membrane biogenesis; lipopolysaccharide biosynthesis. Functionally, catalyzes the transfer of 4-deoxy-4-formamido-L-arabinose from UDP to undecaprenyl phosphate. The modified arabinose is attached to lipid A and is required for resistance to polymyxin and cationic antimicrobial peptides. This Enterobacter sp. (strain 638) protein is Undecaprenyl-phosphate 4-deoxy-4-formamido-L-arabinose transferase.